We begin with the raw amino-acid sequence, 361 residues long: RNA-binding protein 4 (361 aa).

2 consecutive RRM domains span residues 2 to 72 (VKLF…ASKN) and 78 to 148 (TKLH…LSTS). A Glycyl lysine isopeptide (Lys-Gly) (interchain with G-Cter in SUMO2) cross-link involves residue Lys79. Ser86 is subject to Phosphoserine. The CCHC-type zinc-finger motif lies at 160–177 (SGCYRCGKEGHWSKECPI). Positions 196–361 (AVRTPYTMSY…YADRARYSAF (166 aa)) are interaction with TNPO3. Position 306 is a phosphoserine (Ser306).

In terms of assembly, interacts with TNPO3; the interaction mediates nuclear import of the protein and is disrupted by nuclear Ran bound to GTP. Interacts with EIF4G1 and WT1. Interacts with EIF4A1; the interaction is modulated under stress-induced conditions. Interacts with AGO1. Interacts with AGO2; the interaction occurs under both cell proliferation and differentiation conditions and in an RNA- and phosphorylation-independent manner. Interacts with DDX5; the interaction occurs in an RNA-independent manner. Interacts with RBPMS; the interaction allows cooperative assembly of RNA-bound stable cell-specific alternative splicing regulatory complexes. Post-translationally, phosphorylated. Phosphorylated in vitro on Ser-306 by SRPK1. Phosphorylation on Ser-306 is induced upon cell stress signaling, which alters its subcellular localization and may modulate its activity on IRES-mediated mRNA translation. Phosphorylated. Phosphorylation on Ser-306 is induced upon cell muscle differentiation. Expressed in the suprachiasmatic nucleus (SCN). Expressed in myocytes; expression gradually increases during muscle cell differentiation (at protein level). Expressed in the suprachiasmatic nucleus (SCN).

It localises to the nucleus. Its subcellular location is the nucleolus. It is found in the nucleus speckle. The protein resides in the cytoplasm. The protein localises to the cytoplasmic granule. Its function is as follows. RNA-binding factor involved in multiple aspects of cellular processes like alternative splicing of pre-mRNA and translation regulation. Modulates alternative 5'-splice site and exon selection. Acts as a muscle cell differentiation-promoting factor. Activates exon skipping of the PTB pre-mRNA during muscle cell differentiation. Antagonizes the activity of the splicing factor PTBP1 to modulate muscle cell-specific exon selection of alpha tropomyosin. Binds to intronic pyrimidine-rich sequence of the TPM1 and MAPT pre-mRNAs. Required for the translational activation of PER1 mRNA in response to circadian clock. Binds directly to the 3'-UTR of the PER1 mRNA. Exerts a suppressive activity on Cap-dependent translation via binding to CU-rich responsive elements within the 3'UTR of mRNAs, a process increased under stress conditions or during myocytes differentiation. Recruits EIF4A1 to stimulate IRES-dependent translation initiation in respons to cellular stress. Associates to internal ribosome entry segment (IRES) in target mRNA species under stress conditions. Plays a role for miRNA-guided RNA cleavage and translation suppression by promoting association of AGO2-containing miRNPs with their cognate target mRNAs. Associates with miRNAs during muscle cell differentiation. Binds preferentially to 5'-CGCGCG[GCA]-3' motif in vitro. The polypeptide is RNA-binding protein 4 (Rbm4) (Mus musculus (Mouse)).